The sequence spans 438 residues: Trigger factor (438 aa).

Positions 163 to 248 constitute a PPIase FKBP-type domain; the sequence is GEIAVLDFAA…VHAVKERKLP (86 aa).

Belongs to the FKBP-type PPIase family. Tig subfamily.

The protein resides in the cytoplasm. It catalyses the reaction [protein]-peptidylproline (omega=180) = [protein]-peptidylproline (omega=0). Involved in protein export. Acts as a chaperone by maintaining the newly synthesized protein in an open conformation. Functions as a peptidyl-prolyl cis-trans isomerase. In Oleidesulfovibrio alaskensis (strain ATCC BAA-1058 / DSM 17464 / G20) (Desulfovibrio alaskensis), this protein is Trigger factor.